A 357-amino-acid chain; its full sequence is Large ribosomal subunit protein uL10 (357 aa).

The disordered stretch occupies residues 311-357 (MVSRSAEAAERKEKEEEEEEEAEEEEAEEEEEEEEEEAAAGLGALFG). Residues 325 to 348 (EEEEEEEAEEEEAEEEEEEEEEEA) are compositionally biased toward acidic residues.

The protein belongs to the universal ribosomal protein uL10 family. Part of the 50S ribosomal subunit. Forms part of the ribosomal stalk which helps the ribosome interact with GTP-bound translation factors. Forms a heptameric L10(L12)2(L12)2(L12)2 complex, where L10 forms an elongated spine to which the L12 dimers bind in a sequential fashion.

Functionally, forms part of the ribosomal stalk, playing a central role in the interaction of the ribosome with GTP-bound translation factors. The sequence is that of Large ribosomal subunit protein uL10 from Methanopyrus kandleri (strain AV19 / DSM 6324 / JCM 9639 / NBRC 100938).